A 473-amino-acid polypeptide reads, in one-letter code: 3-isopropylmalate dehydratase large subunit (473 aa).

The [4Fe-4S] cluster site is built by Cys354, Cys414, and Cys417.

It belongs to the aconitase/IPM isomerase family. LeuC type 1 subfamily. Heterodimer of LeuC and LeuD. The cofactor is [4Fe-4S] cluster.

It carries out the reaction (2R,3S)-3-isopropylmalate = (2S)-2-isopropylmalate. It participates in amino-acid biosynthesis; L-leucine biosynthesis; L-leucine from 3-methyl-2-oxobutanoate: step 2/4. Its function is as follows. Catalyzes the isomerization between 2-isopropylmalate and 3-isopropylmalate, via the formation of 2-isopropylmaleate. In Mycobacterium ulcerans (strain Agy99), this protein is 3-isopropylmalate dehydratase large subunit.